Here is a 592-residue protein sequence, read N- to C-terminus: Probable oxidoreductase EphD (592 aa).

The 257-residue stretch at 30–286 (PTVVLVHGFP…KAGHFSPMSH (257 aa)) folds into the AB hydrolase-1 domain. S461 is a substrate binding site. Y474 (proton acceptor) is an active-site residue.

The protein belongs to the short-chain dehydrogenases/reductases (SDR) family.

This chain is Probable oxidoreductase EphD (ephD), found in Mycobacterium bovis (strain ATCC BAA-935 / AF2122/97).